The chain runs to 340 residues: Probable dual-specificity RNA methyltransferase RlmN (340 aa).

Residue Glu93 is the Proton acceptor of the active site. In terms of domain architecture, Radical SAM core spans 99–327 (TAKRLTVCVS…VSVRYSRGLE (229 aa)). A disulfide bridge connects residues Cys106 and Cys332. Cys113, Cys117, and Cys120 together coordinate [4Fe-4S] cluster. S-adenosyl-L-methionine is bound by residues 160 to 161 (GE), Ser190, 213 to 215 (SLH), and Asn289. Residue Cys332 is the S-methylcysteine intermediate of the active site.

Belongs to the radical SAM superfamily. RlmN family. Requires [4Fe-4S] cluster as cofactor.

It localises to the cytoplasm. It carries out the reaction adenosine(2503) in 23S rRNA + 2 reduced [2Fe-2S]-[ferredoxin] + 2 S-adenosyl-L-methionine = 2-methyladenosine(2503) in 23S rRNA + 5'-deoxyadenosine + L-methionine + 2 oxidized [2Fe-2S]-[ferredoxin] + S-adenosyl-L-homocysteine. It catalyses the reaction adenosine(37) in tRNA + 2 reduced [2Fe-2S]-[ferredoxin] + 2 S-adenosyl-L-methionine = 2-methyladenosine(37) in tRNA + 5'-deoxyadenosine + L-methionine + 2 oxidized [2Fe-2S]-[ferredoxin] + S-adenosyl-L-homocysteine. Its function is as follows. Specifically methylates position 2 of adenine 2503 in 23S rRNA and position 2 of adenine 37 in tRNAs. This is Probable dual-specificity RNA methyltransferase RlmN from Rippkaea orientalis (strain PCC 8801 / RF-1) (Cyanothece sp. (strain PCC 8801)).